The primary structure comprises 211 residues: Large ribosomal subunit protein uL4 (211 aa).

The disordered stretch occupies residues 44-90 (ERQGTHSTLTKGEVRGGGKKPWRQKHTGKARTGSTRNPHWTGGGVVF). Over residues 60-72 (GGKKPWRQKHTGK) the composition is skewed to basic residues.

It belongs to the universal ribosomal protein uL4 family. As to quaternary structure, part of the 50S ribosomal subunit.

Functionally, one of the primary rRNA binding proteins, this protein initially binds near the 5'-end of the 23S rRNA. It is important during the early stages of 50S assembly. It makes multiple contacts with different domains of the 23S rRNA in the assembled 50S subunit and ribosome. In terms of biological role, forms part of the polypeptide exit tunnel. The sequence is that of Large ribosomal subunit protein uL4 from Ureaplasma parvum serovar 3 (strain ATCC 27815 / 27 / NCTC 11736).